A 150-amino-acid polypeptide reads, in one-letter code: Large ribosomal subunit protein bL9 (150 aa).

This sequence belongs to the bacterial ribosomal protein bL9 family.

Its function is as follows. Binds to the 23S rRNA. This is Large ribosomal subunit protein bL9 from Burkholderia ambifaria (strain MC40-6).